The chain runs to 490 residues: Ketol-acid reductoisomerase (NADP(+)) (490 aa).

A KARI N-terminal Rossmann domain is found at 15 to 208; the sequence is INLQKCKLID…GSHHAGILHS (194 aa). NADP(+) is bound by residues 45-48, Arg68, Ser78, and 108-110; these read CGSQ and DKQ. His132 is a catalytic residue. Gly158 provides a ligand contact to NADP(+). 2 consecutive KARI C-terminal knotted domains span residues 209-344 and 345-484; these read SFIA…KCNI and YYKQ…MTSM. Residues Asp217, Glu221, Glu389, and Glu393 each coordinate Mg(2+). Ser414 lines the substrate pocket.

Belongs to the ketol-acid reductoisomerase family. Mg(2+) serves as cofactor.

The catalysed reaction is (2R)-2,3-dihydroxy-3-methylbutanoate + NADP(+) = (2S)-2-acetolactate + NADPH + H(+). It carries out the reaction (2R,3R)-2,3-dihydroxy-3-methylpentanoate + NADP(+) = (S)-2-ethyl-2-hydroxy-3-oxobutanoate + NADPH + H(+). It participates in amino-acid biosynthesis; L-isoleucine biosynthesis; L-isoleucine from 2-oxobutanoate: step 2/4. Its pathway is amino-acid biosynthesis; L-valine biosynthesis; L-valine from pyruvate: step 2/4. Its function is as follows. Involved in the biosynthesis of branched-chain amino acids (BCAA). Catalyzes an alkyl-migration followed by a ketol-acid reduction of (S)-2-acetolactate (S2AL) to yield (R)-2,3-dihydroxy-isovalerate. In the isomerase reaction, S2AL is rearranged via a Mg-dependent methyl migration to produce 3-hydroxy-3-methyl-2-ketobutyrate (HMKB). In the reductase reaction, this 2-ketoacid undergoes a metal-dependent reduction by NADPH to yield (R)-2,3-dihydroxy-isovalerate. This chain is Ketol-acid reductoisomerase (NADP(+)), found in Buchnera aphidicola subsp. Melaphis rhois.